Here is a 354-residue protein sequence, read N- to C-terminus: Uroporphyrinogen decarboxylase (354 aa).

Substrate contacts are provided by residues 27 to 31 (RQAGR), Asp77, Tyr154, Thr209, and His327.

The protein belongs to the uroporphyrinogen decarboxylase family. As to quaternary structure, homodimer.

It localises to the cytoplasm. It catalyses the reaction uroporphyrinogen III + 4 H(+) = coproporphyrinogen III + 4 CO2. Its pathway is porphyrin-containing compound metabolism; protoporphyrin-IX biosynthesis; coproporphyrinogen-III from 5-aminolevulinate: step 4/4. In terms of biological role, catalyzes the decarboxylation of four acetate groups of uroporphyrinogen-III to yield coproporphyrinogen-III. The protein is Uroporphyrinogen decarboxylase of Sodalis glossinidius (strain morsitans).